We begin with the raw amino-acid sequence, 184 residues long: ATP synthase subunit b, chloroplastic (184 aa).

The chain crosses the membrane as a helical span at residues 27 to 49 (LATNPINLSVVLGVLIFFGKGVL).

The protein belongs to the ATPase B chain family. As to quaternary structure, F-type ATPases have 2 components, F(1) - the catalytic core - and F(0) - the membrane proton channel. F(1) has five subunits: alpha(3), beta(3), gamma(1), delta(1), epsilon(1). F(0) has four main subunits: a(1), b(1), b'(1) and c(10-14). The alpha and beta chains form an alternating ring which encloses part of the gamma chain. F(1) is attached to F(0) by a central stalk formed by the gamma and epsilon chains, while a peripheral stalk is formed by the delta, b and b' chains.

Its subcellular location is the plastid. The protein resides in the chloroplast thylakoid membrane. F(1)F(0) ATP synthase produces ATP from ADP in the presence of a proton or sodium gradient. F-type ATPases consist of two structural domains, F(1) containing the extramembraneous catalytic core and F(0) containing the membrane proton channel, linked together by a central stalk and a peripheral stalk. During catalysis, ATP synthesis in the catalytic domain of F(1) is coupled via a rotary mechanism of the central stalk subunits to proton translocation. In terms of biological role, component of the F(0) channel, it forms part of the peripheral stalk, linking F(1) to F(0). This is ATP synthase subunit b, chloroplastic from Solanum bulbocastanum (Wild potato).